A 107-amino-acid polypeptide reads, in one-letter code: Nucleoid-associated protein BT_0257 (107 aa).

It belongs to the YbaB/EbfC family. Homodimer.

The protein localises to the cytoplasm. The protein resides in the nucleoid. Its function is as follows. Binds to DNA and alters its conformation. May be involved in regulation of gene expression, nucleoid organization and DNA protection. This chain is Nucleoid-associated protein BT_0257, found in Bartonella tribocorum (strain CIP 105476 / IBS 506).